The following is a 393-amino-acid chain: MEPTNDAETLETQGEVTTAIWPSSQILKTTIDIPGTLSHDGRYIQYNLFGHIFELPAKYKPPIRPIGRGACGIVCSAVDSETNEKVAIKKITQVFDNTIEAKRTLREIKLLRHFDHENIVAIRDVILPPQRDSFEDVYIVNELMEFDLYRTLKSDQELTKDHGMYFMYQILRGLKYIHSANVLHRDLKPSNLLLSTQCDLKICDFGLARATPESNLMTEYVVTRWYRAPELLLGSSDYTAAIDVWSVGCIFMEIMNREPLFPGKDQVNQLRLLLELIGTPSEEELGSLSEYAKRYIRQLPTLPRQSFTEKFPNVPPLAIDLVEKMLTFDPKQRISVKEALAHPYLSSFHDITDEPECSEPFNFDLDEHPFSEEQFRELIYCEALAFNPETSND.

One can recognise a Protein kinase domain in the interval 60–345; it reads KPPIRPIGRG…VKEALAHPYL (286 aa). Residues 66-74 and Lys-89 contribute to the ATP site; that span reads IGRGACGIV. Asp-186 functions as the Proton acceptor in the catalytic mechanism. Thr-218 carries the phosphothreonine modification. Residues 218–220 carry the TXY motif; it reads TEY. Tyr-220 is modified (phosphotyrosine). The residue at position 223 (Thr-223) is a Phosphothreonine.

This sequence belongs to the protein kinase superfamily. CMGC Ser/Thr protein kinase family. MAP kinase subfamily. As to quaternary structure, interacts with MKK2. Post-translationally, dually phosphorylated on Thr-218 and Tyr-220, which activates the enzyme.

It catalyses the reaction L-seryl-[protein] + ATP = O-phospho-L-seryl-[protein] + ADP + H(+). The catalysed reaction is L-threonyl-[protein] + ATP = O-phospho-L-threonyl-[protein] + ADP + H(+). With respect to regulation, activated by threonine and tyrosine phosphorylation. This Arabidopsis thaliana (Mouse-ear cress) protein is Mitogen-activated protein kinase 10 (MPK10).